The sequence spans 176 residues: Co-chaperone protein HscB homolog (176 aa).

Positions 7-79 constitute a J domain; that stretch reads THFSLFGLPE…LKRATYLLHL (73 aa).

Belongs to the HscB family. Interacts with HscA and stimulates its ATPase activity.

Functionally, co-chaperone involved in the maturation of iron-sulfur cluster-containing proteins. Seems to help targeting proteins to be folded toward HscA. In Ralstonia nicotianae (strain ATCC BAA-1114 / GMI1000) (Ralstonia solanacearum), this protein is Co-chaperone protein HscB homolog.